We begin with the raw amino-acid sequence, 405 residues long: Cysteine desulfurase IscS (405 aa).

Asn-156 contacts pyridoxal 5'-phosphate. Lys-207 is subject to N6-(pyridoxal phosphate)lysine. Cys-329 (cysteine persulfide intermediate) is an active-site residue. Cys-329 contacts [2Fe-2S] cluster.

The protein belongs to the class-V pyridoxal-phosphate-dependent aminotransferase family. NifS/IscS subfamily. As to quaternary structure, homodimer. Forms a heterotetramer with IscU, interacts with other sulfur acceptors. Pyridoxal 5'-phosphate is required as a cofactor.

Its subcellular location is the cytoplasm. The catalysed reaction is (sulfur carrier)-H + L-cysteine = (sulfur carrier)-SH + L-alanine. Its pathway is cofactor biosynthesis; iron-sulfur cluster biosynthesis. Its function is as follows. Master enzyme that delivers sulfur to a number of partners involved in Fe-S cluster assembly, tRNA modification or cofactor biosynthesis. Catalyzes the removal of elemental sulfur atoms from cysteine to produce alanine. Functions as a sulfur delivery protein for Fe-S cluster synthesis onto IscU, an Fe-S scaffold assembly protein, as well as other S acceptor proteins. The chain is Cysteine desulfurase IscS from Dechloromonas aromatica (strain RCB).